Here is a 156-residue protein sequence, read N- to C-terminus: ATP synthase subunit b (156 aa).

Residues 7 to 27 (LFVQAIVFLILVWFTMQFVWP) traverse the membrane as a helical segment.

This sequence belongs to the ATPase B chain family. In terms of assembly, F-type ATPases have 2 components, F(1) - the catalytic core - and F(0) - the membrane proton channel. F(1) has five subunits: alpha(3), beta(3), gamma(1), delta(1), epsilon(1). F(0) has three main subunits: a(1), b(2) and c(10-14). The alpha and beta chains form an alternating ring which encloses part of the gamma chain. F(1) is attached to F(0) by a central stalk formed by the gamma and epsilon chains, while a peripheral stalk is formed by the delta and b chains.

It localises to the cell inner membrane. Its function is as follows. F(1)F(0) ATP synthase produces ATP from ADP in the presence of a proton or sodium gradient. F-type ATPases consist of two structural domains, F(1) containing the extramembraneous catalytic core and F(0) containing the membrane proton channel, linked together by a central stalk and a peripheral stalk. During catalysis, ATP synthesis in the catalytic domain of F(1) is coupled via a rotary mechanism of the central stalk subunits to proton translocation. Component of the F(0) channel, it forms part of the peripheral stalk, linking F(1) to F(0). This Verminephrobacter eiseniae (strain EF01-2) protein is ATP synthase subunit b.